We begin with the raw amino-acid sequence, 348 residues long: Protein RecA (348 aa).

Position 67 to 74 (67 to 74 (GPESSGKT)) interacts with ATP.

Belongs to the RecA family.

It localises to the cytoplasm. In terms of biological role, can catalyze the hydrolysis of ATP in the presence of single-stranded DNA, the ATP-dependent uptake of single-stranded DNA by duplex DNA, and the ATP-dependent hybridization of homologous single-stranded DNAs. It interacts with LexA causing its activation and leading to its autocatalytic cleavage. The protein is Protein RecA of Cutibacterium acnes (Propionibacterium acnes).